We begin with the raw amino-acid sequence, 388 residues long: Succinate--CoA ligase [ADP-forming] subunit beta (388 aa).

An ATP-grasp domain is found at 9-244; that stretch reads KQLFAEYGLP…PSQDDPREAH (236 aa). Residues lysine 46, 53–55, glutamate 99, threonine 102, and glutamate 107 each bind ATP; that span reads GRG. Residues asparagine 199 and aspartate 213 each coordinate Mg(2+). Residues asparagine 264 and 321–323 each bind substrate; that span reads GIV.

This sequence belongs to the succinate/malate CoA ligase beta subunit family. In terms of assembly, heterotetramer of two alpha and two beta subunits. It depends on Mg(2+) as a cofactor.

It catalyses the reaction succinate + ATP + CoA = succinyl-CoA + ADP + phosphate. It carries out the reaction GTP + succinate + CoA = succinyl-CoA + GDP + phosphate. It participates in carbohydrate metabolism; tricarboxylic acid cycle; succinate from succinyl-CoA (ligase route): step 1/1. In terms of biological role, succinyl-CoA synthetase functions in the citric acid cycle (TCA), coupling the hydrolysis of succinyl-CoA to the synthesis of either ATP or GTP and thus represents the only step of substrate-level phosphorylation in the TCA. The beta subunit provides nucleotide specificity of the enzyme and binds the substrate succinate, while the binding sites for coenzyme A and phosphate are found in the alpha subunit. This chain is Succinate--CoA ligase [ADP-forming] subunit beta, found in Pseudomonas syringae pv. tomato (strain ATCC BAA-871 / DC3000).